Here is a 471-residue protein sequence, read N- to C-terminus: Casein kinase 1-like protein 9 (471 aa).

Positions 9 to 278 (FKLGRKIGSG…LKRLFRDLFI (270 aa)) constitute a Protein kinase domain. Residues 15 to 23 (IGSGSFGEL) and Lys38 contribute to the ATP site. Asp128 acts as the Proton acceptor in catalysis. Residues 300-471 (SSSGSSSRTR…RSLELLTLRK (172 aa)) are disordered. The span at 325–339 (EKQERIAGKETRENR) shows a compositional bias: basic and acidic residues. Over residues 385–430 (SSRYGSSSRRAIPSSSRPSSAGGPSDSRSSSRLVTSTGGVGTVSNR) the composition is skewed to low complexity. A compositionally biased stretch (polar residues) spans 431-449 (ASTSQRIQAGNESRTSSFS). Positions 454–464 (NTREDPLRRSL) are enriched in basic and acidic residues.

Belongs to the protein kinase superfamily. CK1 Ser/Thr protein kinase family. Casein kinase I subfamily. In terms of assembly, monomer. Post-translationally, autophosphorylated on serine, threonine and tyrosine residues. Expressed in leaves, stems and flowers.

The protein localises to the cytoplasm. Its subcellular location is the nucleus. The catalysed reaction is L-seryl-[protein] + ATP = O-phospho-L-seryl-[protein] + ADP + H(+). It carries out the reaction L-threonyl-[protein] + ATP = O-phospho-L-threonyl-[protein] + ADP + H(+). Casein kinases are operationally defined by their preferential utilization of acidic proteins such as caseins as substrates. Can phosphorylate casein on serine and threonine residues, and poly(Glu,Tyr) in vitro. The chain is Casein kinase 1-like protein 9 from Arabidopsis thaliana (Mouse-ear cress).